Consider the following 654-residue polypeptide: MSMDISDFYQTFFDEADELLADMEQHLLVLQPEAPDAEQLNAIFRAAHSIKGGAGTFGFSVLQETTHLMENLLDEARRGEMQLNTDIINLFLETKDIMQEQLDAYKQSQEPDAASFDYICQALRQLALEAKGETPSAVTRLSVVAKSEPQDEQSRSQSPRRIILSRLKAGEVDLLEEELGHLTTLTDVVKGADSLSAILPGDIAEDDITAVLCFVIEADQITFETVEVSPKISTPPVLKLAAEQAPTGRVEREKTTRSNESTSIRVAVEKVDQLINLVGELVITQSMLAQRSSELDPVNHGDLITSMGQLQRNARDLQESVMSIRMMPMEYVFSRYPRLVRDLAGKLGKQVELTLVGSSTELDKSLIERIIDPLTHLVRNSLDHGIELPEKRLAAGKNSVGNLILSAEHQGGNICIEVTDDGAGLNRERILAKAASQGLTVSENMSDDEVAMLIFAPGFSTAEQVTDVSGRGVGMDVVKRNIQKMGGHVEIQSKQGTGTTIRILLPLTLAILDGMSVRVADEVFILPLNAVMESLQPREADLHPLAGGERVLEVRGEYLPIVELWKVFNVAGAKTEATQGIVVILQSGGRRYALLVDQLIGQHQVVVKNLESNYRKVPGISAATILGDGSVALIVDVSALQAINREQRMANTAA.

The HPt domain maps to methionine 1–tyrosine 105. Phosphohistidine; by autocatalysis is present on histidine 48. A Histidine kinase domain is found at arginine 257–leucine 509. Positions isoleucine 511 to glutamate 646 constitute a CheW-like domain.

As to quaternary structure, an in vitro complex of CheW/CheA(L)/CheA(S) in a 1:1:1 ratio increases the autophosphorylation of CheA and is required for the binding of CheY, the phosphorylation substrate. This complex accounts for 10% of the total number of molecules.

It localises to the cytoplasm. The enzyme catalyses ATP + protein L-histidine = ADP + protein N-phospho-L-histidine.. Involved in the transmission of sensory signals from the chemoreceptors to the flagellar motors. CheA is autophosphorylated; it can transfer its phosphate group to either CheB or CheY. The protein is Chemotaxis protein CheA (cheA) of Escherichia coli (strain K12).